The sequence spans 195 residues: MKIWTSEHVFDHPWEMVTTAAMQKYPNPMNPSVVGVDVLDRHVDPSGKLHSHRLLSTEWGLPSIVKSLIGAARTKTYVQEHSVVDPVKKTMELKSTNISFTNMVSVDERLTYKPHPQDPEKTVLTQEAIITVKGVSLSSYLEGLMASTISSNANKGREAMEWVIHKLNAEIEDLAASARGSIRTPMAAAAALVEK.

In terms of domain architecture, PRELI/MSF1 spans 1–172; sequence MKIWTSEHVF…VIHKLNAEIE (172 aa). 2 positions are modified to phosphoserine: Ser46 and Ser51.

The protein belongs to the slowmo family.

The chain is PRELI domain containing protein 3B (PRELID3B) from Cricetulus griseus (Chinese hamster).